We begin with the raw amino-acid sequence, 184 residues long: NADH-quinone oxidoreductase subunit B (184 aa).

Positions 37, 38, 103, and 132 each coordinate [4Fe-4S] cluster.

The protein belongs to the complex I 20 kDa subunit family. NDH-1 is composed of 14 different subunits. Subunits NuoB, C, D, E, F, and G constitute the peripheral sector of the complex. [4Fe-4S] cluster is required as a cofactor.

It localises to the cell membrane. It catalyses the reaction a quinone + NADH + 5 H(+)(in) = a quinol + NAD(+) + 4 H(+)(out). NDH-1 shuttles electrons from NADH, via FMN and iron-sulfur (Fe-S) centers, to quinones in the respiratory chain. The immediate electron acceptor for the enzyme in this species is believed to be a menaquinone. Couples the redox reaction to proton translocation (for every two electrons transferred, four hydrogen ions are translocated across the cytoplasmic membrane), and thus conserves the redox energy in a proton gradient. The polypeptide is NADH-quinone oxidoreductase subunit B (Mycolicibacterium gilvum (strain PYR-GCK) (Mycobacterium gilvum (strain PYR-GCK))).